Consider the following 491-residue polypeptide: G2/mitotic-specific cyclin-2 (491 aa).

N-acetylserine is present on serine 2. Disordered regions lie at residues 59–107 and 164–184; these read EGSR…DPSS and HPAR…SGKK. A compositionally biased stretch (polar residues) spans 67–77; the sequence is TRESVSRSTAA.

Belongs to the cyclin family. Cyclin AB subfamily. As to quaternary structure, interacts with NAP1.

In terms of biological role, essential for the control of the cell cycle at the G2/M (mitosis) transition. Interacts with the CDC2 protein kinase to form MPF. G2/M cyclins accumulate steadily during G2 and are abruptly destroyed at mitosis. The sequence is that of G2/mitotic-specific cyclin-2 (CLB2) from Saccharomyces cerevisiae (strain ATCC 204508 / S288c) (Baker's yeast).